Consider the following 465-residue polypeptide: Ribulose bisphosphate carboxylase large chain (465 aa).

N6,N6,N6-trimethyllysine is present on Lys4. 2 residues coordinate substrate: Asn113 and Thr163. Residue Lys165 is the Proton acceptor of the active site. Lys167 lines the substrate pocket. The Mg(2+) site is built by Lys191, Asp193, and Glu194. Lys191 bears the N6-carboxylysine mark. His284 functions as the Proton acceptor in the catalytic mechanism. The substrate site is built by Arg285, His317, and Ser369.

It belongs to the RuBisCO large chain family. Type I subfamily. In terms of assembly, heterohexadecamer of 8 large chains and 8 small chains; disulfide-linked. The disulfide link is formed within the large subunit homodimers. Mg(2+) serves as cofactor. In terms of processing, the disulfide bond which can form in the large chain dimeric partners within the hexadecamer appears to be associated with oxidative stress and protein turnover.

It is found in the plastid. It localises to the chloroplast. It carries out the reaction 2 (2R)-3-phosphoglycerate + 2 H(+) = D-ribulose 1,5-bisphosphate + CO2 + H2O. The catalysed reaction is D-ribulose 1,5-bisphosphate + O2 = 2-phosphoglycolate + (2R)-3-phosphoglycerate + 2 H(+). In terms of biological role, ruBisCO catalyzes two reactions: the carboxylation of D-ribulose 1,5-bisphosphate, the primary event in carbon dioxide fixation, as well as the oxidative fragmentation of the pentose substrate in the photorespiration process. Both reactions occur simultaneously and in competition at the same active site. This is Ribulose bisphosphate carboxylase large chain from Hamamelis mollis (Chinese witch hazel).